The following is a 485-amino-acid chain: Caspid protein (485 aa).

N-linked (GlcNAc...) asparagine; by host glycans are attached at residues Asn5 and Asn178. Residues 236-262 (IALTLFNLADTLLGGLPTELISSAGGQ) are particle formation. Asn430 carries an N-linked (GlcNAc...) asparagine; by host glycan. The oligomerization stretch occupies residues 453 to 478 (TTSLGAGPVSISAVAVLAPHSALALL).

Belongs to the hepevirus capsid protein family. As to quaternary structure, self-assembles to form the capsid. The capsid is dominated by dimers that define the 30 morphological units. Interacts with phosphorylated protein ORF3. Interacts with host TMEM134. Interacts with host ASGR1 and ASGR2; these interactions facilitate infection of host hepatocytes. In terms of processing, not N-glycosylated.

The protein localises to the virion. It is found in the host cytoplasm. Its subcellular location is the host endoplasmic reticulum. It localises to the host Golgi apparatus. The protein resides in the host cell surface. The protein localises to the host nucleus. Functionally, forms an icosahedral capsid with a T=1 symmetry and a 34 nm diameter. The capsid is composed of 60 copies linked to each other. Binds to the 5' end of the genomic RNA to mediate genome encapsidation. Binds to heparin surface proteoglycans (HSPGs) to mediate viral entry. Additionally, the interactions with host ASGR1 and ASGR2 facilitate viral infection of hepatocytes. Inhibits IFN production by blocking host TBK1-induced IRF3 phosphorylation. The nuclear form probably modulates host gene expression. The sequence is that of Caspid protein from Hepatitis E virus (isolate Rhesus/HT-4) (HEV).